Here is a 229-residue protein sequence, read N- to C-terminus: Enolase-phosphatase E1 (229 aa).

The interval 207-229 is disordered; the sequence is RDPASHHPQVQRFDDIHPEQIPA. Over residues 218–229 the composition is skewed to basic and acidic residues; that stretch reads RFDDIHPEQIPA.

The protein belongs to the HAD-like hydrolase superfamily. MasA/MtnC family. In terms of assembly, monomer. It depends on Mg(2+) as a cofactor.

The catalysed reaction is 5-methylsulfanyl-2,3-dioxopentyl phosphate + H2O = 1,2-dihydroxy-5-(methylsulfanyl)pent-1-en-3-one + phosphate. The protein operates within amino-acid biosynthesis; L-methionine biosynthesis via salvage pathway; L-methionine from S-methyl-5-thio-alpha-D-ribose 1-phosphate: step 3/6. It functions in the pathway amino-acid biosynthesis; L-methionine biosynthesis via salvage pathway; L-methionine from S-methyl-5-thio-alpha-D-ribose 1-phosphate: step 4/6. Its function is as follows. Bifunctional enzyme that catalyzes the enolization of 2,3-diketo-5-methylthiopentyl-1-phosphate (DK-MTP-1-P) into the intermediate 2-hydroxy-3-keto-5-methylthiopentenyl-1-phosphate (HK-MTPenyl-1-P), which is then dephosphorylated to form the acireductone 1,2-dihydroxy-3-keto-5-methylthiopentene (DHK-MTPene). The sequence is that of Enolase-phosphatase E1 from Klebsiella pneumoniae subsp. pneumoniae (strain ATCC 700721 / MGH 78578).